The sequence spans 80 residues: MAITNEQVERINELARKKKAEGLSEAELEEQALLRRAYLDSVKANFRSQVETIKVIDEKTGEDVTPDKLKEIQRKNGMRD.

It belongs to the UPF0291 family.

It localises to the cytoplasm. The sequence is that of UPF0291 protein YlaC (ylcA) from Lactococcus lactis subsp. lactis (strain IL1403) (Streptococcus lactis).